We begin with the raw amino-acid sequence, 297 residues long: Cyclin-dependent kinase 1 (297 aa).

Met1 is subject to N-acetylmethionine. Residue Tyr4 is modified to Phosphotyrosine; by PKR. The region spanning 4 to 287 is the Protein kinase domain; it reads YTKIEKIGEG…GKMALNHPYF (284 aa). N6-acetyllysine; alternate is present on residues Lys6 and Lys9. Glycyl lysine isopeptide (Lys-Gly) (interchain with G-Cter in SUMO2); alternate cross-links involve residues Lys6 and Lys9. Residue 10-18 participates in ATP binding; the sequence is IGEGTYGVV. At Thr14 the chain carries Phosphothreonine; by PKMYT1. A Phosphotyrosine; by PKMYT1, WEE1 and WEE2 modification is found at Tyr15. Tyr15 carries the post-translational modification Phosphotyrosine; by WEE1 and WEE2. Tyr19 is modified (phosphotyrosine). Lys20 is covalently cross-linked (Glycyl lysine isopeptide (Lys-Gly) (interchain with G-Cter in SUMO2)). An ATP-binding site is contributed by Lys33. Ser39 carries the phosphoserine modification. Residue Tyr77 is modified to Phosphotyrosine. Asp128 acts as the Proton acceptor in catalysis. Lys139 participates in a covalent cross-link: Glycyl lysine isopeptide (Lys-Gly) (interchain with G-Cter in SUMO2). Thr141 carries the post-translational modification Phosphothreonine. Thr161 bears the Phosphothreonine; by CAK mark. Ser178 bears the Phosphoserine mark. Thr222 bears the Phosphothreonine mark. Lys245 carries the post-translational modification N6-succinyllysine. Position 248 is a phosphoserine (Ser248).

The protein belongs to the protein kinase superfamily. CMGC Ser/Thr protein kinase family. CDC2/CDKX subfamily. Forms a stable but non-covalent complex with a regulatory subunit and with a cyclin. Interacts with cyclins-B (CCNB1, CCNB2 and CCNB3) to form a serine/threonine kinase holoenzyme complex also known as maturation promoting factor (MPF). The cyclin subunit imparts substrate specificity to the complex. Can also form CDK1-cylin-D and CDK1-cyclin-E complexes that phosphorylate RB1 in vitro. Binds to RB1 and other transcription factors such as FOXO1 and RUNX2. Promotes G2-M transition when in complex with a cyclin-B. Interacts with DLGAP5. Binds to the CDK inhibitors CDKN1A/p21 and CDKN1B/p27. Isoform 2 is unable to complex with cyclin-B1 and also fails to bind to CDKN1A/p21. Interacts with catalytically active CCNB1 and RALBP1 during mitosis to form an endocytotic complex during interphase. Associates with cyclins-A and B1 during S-phase in regenerating hepatocytes. Interacts with FANCC. Interacts with CEP63; this interaction recruits CDK1 to centrosomes. Interacts with CENPA. Interacts with NR1D1. Interacts with proteasome subunit PSMA8; to participate in meiosis progression during spermatogenesis. Phosphorylation at Thr-161 by CAK/CDK7 activates kinase activity. Phosphorylation at Thr-14 and Tyr-15 by PKMYT1 prevents nuclear translocation. Phosphorylation at Tyr-15 by WEE1 and WEE2 inhibits the protein kinase activity and acts as a negative regulator of entry into mitosis (G2 to M transition). Phosphorylation by PKMYT1 and WEE1 takes place during mitosis to keep CDK1-cyclin-B complexes inactive until the end of G2. By the end of G2, PKMYT1 and WEE1 are inactivated, but CDC25A and CDC25B are activated. Dephosphorylation by active CDC25A and CDC25B at Thr-14 and Tyr-15, leads to CDK1 activation at the G2-M transition. Phosphorylation at Tyr-15 by WEE2 during oogenesis is required to maintain meiotic arrest in oocytes during the germinal vesicle (GV) stage, a long period of quiescence at dictyate prophase I, leading to prevent meiotic reentry. Phosphorylation by WEE2 is also required for metaphase II exit during egg activation to ensure exit from meiosis in oocytes and promote pronuclear formation. Phosphorylated at Tyr-4 by PKR/EIF2AK2 upon genotoxic stress. This phosphorylation triggers CDK1 polyubiquitination and subsequent proteolysis, thus leading to G2 arrest. In terms of processing, polyubiquitinated upon genotoxic stress.

The protein resides in the nucleus. The protein localises to the cytoplasm. Its subcellular location is the mitochondrion. It is found in the cytoskeleton. It localises to the microtubule organizing center. The protein resides in the centrosome. The protein localises to the spindle. It catalyses the reaction L-seryl-[protein] + ATP = O-phospho-L-seryl-[protein] + ADP + H(+). The enzyme catalyses L-threonyl-[protein] + ATP = O-phospho-L-threonyl-[protein] + ADP + H(+). It carries out the reaction [DNA-directed RNA polymerase] + ATP = phospho-[DNA-directed RNA polymerase] + ADP + H(+). Its activity is regulated as follows. Phosphorylation at Thr-14 or Tyr-15 inactivates the enzyme, while phosphorylation at Thr-161 activates it. Activated through a multistep process; binding to cyclin-B is required for relocation of cyclin-kinase complexes to the nucleus, activated by CAK/CDK7-mediated phosphorylation on Thr-161, and CDC25-mediated dephosphorylation of inhibitory phosphorylation on Thr-14 and Tyr-15. Activity is restricted during S-phase in an ATR-dependent manner to prevent premature entry into G2. Repressed by the CDK inhibitors CDKN1A/p21 and CDKN1B/p27 during the G1 phase and by CDKN1A/p21 at the G1-S checkpoint upon DNA damage. Transient activation by rapid and transient dephosphorylation at Tyr-15 triggered by TGFB1. Its function is as follows. Plays a key role in the control of the eukaryotic cell cycle by modulating the centrosome cycle as well as mitotic onset; promotes G2-M transition via association with multiple interphase cyclins. Phosphorylates PARVA/actopaxin, APC, AMPH, APC, BARD1, Bcl-xL/BCL2L1, BRCA2, CALD1, CASP8, CDC7, CDC20, CDC25A, CDC25C, CC2D1A, CENPA, CSNK2 proteins/CKII, FZR1/CDH1, CDK7, CEBPB, CHAMP1, DMD/dystrophin, EEF1 proteins/EF-1, EZH2, KIF11/EG5, EGFR, FANCG, FOS, GFAP, GOLGA2/GM130, GRASP1, UBE2A/hHR6A, HIST1H1 proteins/histone H1, HMGA1, HIVEP3/KRC, KAT5, LMNA, LMNB, LBR, LATS1, MAP1B, MAP4, MARCKS, MCM2, MCM4, MKLP1, MLST8, MYB, NEFH, NFIC, NPC/nuclear pore complex, PITPNM1/NIR2, NPM1, NCL, NUCKS1, NPM1/numatrin, ORC1, PRKAR2A, EEF1E1/p18, EIF3F/p47, p53/TP53, NONO/p54NRB, PAPOLA, PLEC/plectin, RB1, TPPP, UL40/R2, RAB4A, RAP1GAP, RBBP8/CtIP, RCC1, RPS6KB1/S6K1, KHDRBS1/SAM68, ESPL1, SKI, BIRC5/survivin, STIP1, TEX14, beta-tubulins, MAPT/TAU, NEDD1, VIM/vimentin, TK1, FOXO1, RUNX1/AML1, SAMHD1, SIRT2, CGAS and RUNX2. CDK1/CDC2-cyclin-B controls pronuclear union in interphase fertilized eggs. Essential for early stages of embryonic development. During G2 and early mitosis, CDC25A/B/C-mediated dephosphorylation activates CDK1/cyclin complexes which phosphorylate several substrates that trigger at least centrosome separation, Golgi dynamics, nuclear envelope breakdown and chromosome condensation. Once chromosomes are condensed and aligned at the metaphase plate, CDK1 activity is switched off by WEE1- and PKMYT1-mediated phosphorylation to allow sister chromatid separation, chromosome decondensation, reformation of the nuclear envelope and cytokinesis. Phosphorylates KRT5 during prometaphase and metaphase. Inactivated by PKR/EIF2AK2- and WEE1-mediated phosphorylation upon DNA damage to stop cell cycle and genome replication at the G2 checkpoint thus facilitating DNA repair. Reactivated after successful DNA repair through WIP1-dependent signaling leading to CDC25A/B/C-mediated dephosphorylation and restoring cell cycle progression. Catalyzes lamin (LMNA, LMNB1 and LMNB2) phosphorylation at the onset of mitosis, promoting nuclear envelope breakdown. In proliferating cells, CDK1-mediated FOXO1 phosphorylation at the G2-M phase represses FOXO1 interaction with 14-3-3 proteins and thereby promotes FOXO1 nuclear accumulation and transcription factor activity, leading to cell death of postmitotic neurons. The phosphorylation of beta-tubulins regulates microtubule dynamics during mitosis. NEDD1 phosphorylation promotes PLK1-mediated NEDD1 phosphorylation and subsequent targeting of the gamma-tubulin ring complex (gTuRC) to the centrosome, an important step for spindle formation. In addition, CC2D1A phosphorylation regulates CC2D1A spindle pole localization and association with SCC1/RAD21 and centriole cohesion during mitosis. The phosphorylation of Bcl-xL/BCL2L1 after prolongated G2 arrest upon DNA damage triggers apoptosis. In contrast, CASP8 phosphorylation during mitosis prevents its activation by proteolysis and subsequent apoptosis. This phosphorylation occurs in cancer cell lines, as well as in primary breast tissues and lymphocytes. EZH2 phosphorylation promotes H3K27me3 maintenance and epigenetic gene silencing. CALD1 phosphorylation promotes Schwann cell migration during peripheral nerve regeneration. CDK1-cyclin-B complex phosphorylates NCKAP5L and mediates its dissociation from centrosomes during mitosis. Regulates the amplitude of the cyclic expression of the core clock gene BMAL1 by phosphorylating its transcriptional repressor NR1D1, and this phosphorylation is necessary for SCF(FBXW7)-mediated ubiquitination and proteasomal degradation of NR1D1. Phosphorylates EML3 at 'Thr-881' which is essential for its interaction with HAUS augmin-like complex and TUBG1. Phosphorylates CGAS during mitosis, leading to its inhibition, thereby preventing CGAS activation by self DNA during mitosis. Phosphorylates SKA3 during mitosis which promotes SKA3 binding to the NDC80 complex and anchoring of the SKA complex to kinetochores, to enable stable attachment of mitotic spindle microtubules to kinetochores. The sequence is that of Cyclin-dependent kinase 1 (CDK1) from Pongo abelii (Sumatran orangutan).